A 115-amino-acid polypeptide reads, in one-letter code: NADH-ubiquinone oxidoreductase chain 3 (115 aa).

3 helical membrane passes run 3 to 23 (LPLA…IAFW), 55 to 75 (FFLV…LLPL), and 86 to 106 (LMLT…AYEW).

The protein belongs to the complex I subunit 3 family. In terms of assembly, core subunit of respiratory chain NADH dehydrogenase (Complex I) which is composed of 45 different subunits. Interacts with TMEM186. Interacts with TMEM242.

It localises to the mitochondrion inner membrane. It carries out the reaction a ubiquinone + NADH + 5 H(+)(in) = a ubiquinol + NAD(+) + 4 H(+)(out). Functionally, core subunit of the mitochondrial membrane respiratory chain NADH dehydrogenase (Complex I) which catalyzes electron transfer from NADH through the respiratory chain, using ubiquinone as an electron acceptor. Essential for the catalytic activity of complex I. This is NADH-ubiquinone oxidoreductase chain 3 from Lemur catta (Ring-tailed lemur).